A 527-amino-acid polypeptide reads, in one-letter code: Baeyer-Villiger monooxygenase (527 aa).

FAD is bound by residues serine 36, glutamate 56, 64–67 (TWRV), aspartate 76, tyrosine 82, and isoleucine 125. NADP(+) is bound at residue 74–76 (ACD). Residues 199–205 (TGASAIQ), 222–223 (RT), and 308–309 (KR) each bind NADP(+). Methionine 415 serves as a coordination point for FAD.

The protein belongs to the FAD-binding monooxygenase family. FAD is required as a cofactor.

Catalyzes a Baeyer-Villiger oxidation reaction, i.e. the insertion of an oxygen atom into a carbon-carbon bond adjacent to a carbonyl, which converts ketones to esters or lactones using NADPH and/or NADH as an electron donor. Thus, can convert bicyclo[3.2.0]hept-2-en-6-one into the oxidative lactone products 2-oxabicyclo[3.3.0]oct-6-en-3-one and 3-oxabicyclo[3.3.0]oct-6-en-2-one. Is also able to catalyze the sulfoxidation of methyl phenyl sulfide (thioanisole). The polypeptide is Baeyer-Villiger monooxygenase (Pseudomonas aeruginosa (strain ATCC 15692 / DSM 22644 / CIP 104116 / JCM 14847 / LMG 12228 / 1C / PRS 101 / PAO1)).